Consider the following 501-residue polypeptide: ATP synthase subunit alpha (501 aa).

169–176 is a binding site for ATP; it reads GDRQTGKT.

This sequence belongs to the ATPase alpha/beta chains family. F-type ATPases have 2 components, CF(1) - the catalytic core - and CF(0) - the membrane proton channel. CF(1) has five subunits: alpha(3), beta(3), gamma(1), delta(1), epsilon(1). CF(0) has three main subunits: a(1), b(2) and c(9-12). The alpha and beta chains form an alternating ring which encloses part of the gamma chain. CF(1) is attached to CF(0) by a central stalk formed by the gamma and epsilon chains, while a peripheral stalk is formed by the delta and b chains.

Its subcellular location is the cell inner membrane. The enzyme catalyses ATP + H2O + 4 H(+)(in) = ADP + phosphate + 5 H(+)(out). Its function is as follows. Produces ATP from ADP in the presence of a proton gradient across the membrane. The alpha chain is a regulatory subunit. The protein is ATP synthase subunit alpha of Campylobacter lari (strain RM2100 / D67 / ATCC BAA-1060).